A 1174-amino-acid chain; its full sequence is HEAT repeat-containing protein 6 (1174 aa).

The HEAT 1 repeat unit spans residues 168 to 207; that stretch reads NELLGPTGILVNLCDPSQPDPELWREAIHCMANLCLGVPG. 2 disordered regions span residues 304-346 and 373-392; these read GRSP…EELK and LGPQ…KDHF. The span at 323-335 shows a compositional bias: basic residues; sequence SKKKRKAGKQKKG. A compositionally biased stretch (basic and acidic residues) spans 336-346; it reads HQGEESKEELK. 3 HEAT repeats span residues 460-498, 523-560, and 566-603; these read GIGS…GSKQ, SIRE…NAPY, and GLLT…AQVS. Positions 619-648 are disordered; the sequence is SQNSGSATPSDPESNRKESMLEGGKKNGLH. Residues 631–648 show a composition bias toward basic and acidic residues; that stretch reads ESNRKESMLEGGKKNGLH.

The protein is HEAT repeat-containing protein 6 (heatr6) of Xenopus laevis (African clawed frog).